The chain runs to 359 residues: Glycerol-3-phosphate dehydrogenase [NAD(P)+] (359 aa).

The NADPH site is built by Thr11, Trp12, Arg32, and Lys107. Residues Lys107 and Gly138 each contribute to the sn-glycerol 3-phosphate site. Ala142 lines the NADPH pocket. Sn-glycerol 3-phosphate contacts are provided by Lys193, Asp246, Ser256, Arg257, and Asn258. Lys193 (proton acceptor) is an active-site residue. Residue Arg257 participates in NADPH binding. The NADPH site is built by Val281 and Glu283.

The protein belongs to the NAD-dependent glycerol-3-phosphate dehydrogenase family.

It is found in the cytoplasm. It catalyses the reaction sn-glycerol 3-phosphate + NAD(+) = dihydroxyacetone phosphate + NADH + H(+). The enzyme catalyses sn-glycerol 3-phosphate + NADP(+) = dihydroxyacetone phosphate + NADPH + H(+). It participates in membrane lipid metabolism; glycerophospholipid metabolism. Functionally, catalyzes the reduction of the glycolytic intermediate dihydroxyacetone phosphate (DHAP) to sn-glycerol 3-phosphate (G3P), the key precursor for phospholipid synthesis. The protein is Glycerol-3-phosphate dehydrogenase [NAD(P)+] of Dehalococcoides mccartyi (strain CBDB1).